An 853-amino-acid polypeptide reads, in one-letter code: DNA mismatch repair protein MutS (853 aa).

Gly-613 to Ser-620 is an ATP binding site.

This sequence belongs to the DNA mismatch repair MutS family.

Functionally, this protein is involved in the repair of mismatches in DNA. It is possible that it carries out the mismatch recognition step. This protein has a weak ATPase activity. This Vibrio atlanticus (strain LGP32) (Vibrio splendidus (strain Mel32)) protein is DNA mismatch repair protein MutS.